A 461-amino-acid chain; its full sequence is Protein-serine O-palmitoleoyltransferase porcupine (461 aa).

The Cytoplasmic segment spans residues 1–17 (MATFSRQEFFQQLLQGC). The chain crosses the membrane as a helical span at residues 18 to 38 (LLPTVQQGLDQIWLLLTICFA). Residues 39 to 66 (CRLLWRLGLPSYLKHASTVAGGFFSLYH) lie on the Extracellular side of the membrane. The helical transmembrane segment at 67–87 (FFQLHMVWVVLLSLLCYLVLF) threads the bilayer. Residues 88 to 95 (LCRHSSHR) are Cytoplasmic-facing. Residues 96-116 (GVFLSVTILIYLLMGEMHMVD) form a helical membrane-spanning segment. At 117–152 (TVTWHKMRGAQMIVAMKAVSLGFDLDRGEVGAVPSP) the chain is on the extracellular side. Residues 153 to 173 (VEFMGYLYFVGTIVFGPWISF) form a helical membrane-spanning segment. The Cytoplasmic portion of the chain corresponds to 174–198 (HSYLQAVQGRPLSRRWLKKVARSLA). A helical transmembrane segment spans residues 199-219 (LALLCLVLSTCVGPYLFPYFI). The Extracellular segment spans residues 220–252 (PLDGDRLLRNKKRKARGTMVRWLRAYESAVSFH). The chain crosses the membrane as a helical span at residues 253–273 (FSNYFVGFLSEATATLAGAGF). The Cytoplasmic portion of the chain corresponds to 274 to 337 (TEEKDHLEWD…SAVLVTYAAS (64 aa)). Residues 338 to 358 (ALLHGFSFHLAAVLLSLAFIT) traverse the membrane as a helical segment. His-341 is a catalytic residue. Residues 359–396 (YVEHVLRKRLAQILSACILSKRCLPDCSHRHRLGLGVR) lie on the Extracellular side of the membrane. The helical transmembrane segment at 397–417 (ALNLLFGALAIFHLSYLGSLF) threads the bilayer. Over 418–461 (DVDVDDTTEEQGYGMAYTVHKWSELSWASHWVTFGCWIFYRLIG) the chain is Cytoplasmic.

It belongs to the membrane-bound acyltransferase family. Porcupine subfamily. In terms of assembly, interacts with WNT1, WNT3, WNT3A, WNT4, WNT5A, WNT5B, WNT6, WNT7A and WNT7B. In terms of tissue distribution, expressed in brain, heart, kidney, liver, lung, muscle, spleen and testis. Isoform 4 is strongly expressed in kidney, liver, lung, spleen and testis. Isoform 1 is strongly expressed in brain, heart and muscle and poorly in kidney, liver, lung, spleen and testis.

It is found in the endoplasmic reticulum membrane. It carries out the reaction [Wnt protein]-L-serine + (9Z)-hexadecenoyl-CoA = [Wnt protein]-O-(9Z)-hexadecenoyl-L-serine + CoA. Functionally, protein-serine O-palmitoleoyltransferase that acts as a key regulator of the Wnt signaling pathway by mediating the attachment of palmitoleate, a 16-carbon monounsaturated fatty acid (C16:1(9Z)), to Wnt proteins. Serine palmitoleoylation of WNT proteins is required for efficient binding to frizzled receptors. The chain is Protein-serine O-palmitoleoyltransferase porcupine from Mus musculus (Mouse).